The chain runs to 205 residues: Octanoyltransferase (205 aa).

Positions 29–204 constitute a BPL/LPL catalytic domain; it reads AETPDEIWIV…HLLQQLDQKN (176 aa). Substrate is bound by residues 68-75, 135-137, and 148-150; these read RGGQVTYH, ALG, and GVS. Cysteine 166 (acyl-thioester intermediate) is an active-site residue.

Belongs to the LipB family.

It is found in the cytoplasm. It carries out the reaction octanoyl-[ACP] + L-lysyl-[protein] = N(6)-octanoyl-L-lysyl-[protein] + holo-[ACP] + H(+). Its pathway is protein modification; protein lipoylation via endogenous pathway; protein N(6)-(lipoyl)lysine from octanoyl-[acyl-carrier-protein]: step 1/2. Functionally, catalyzes the transfer of endogenously produced octanoic acid from octanoyl-acyl-carrier-protein onto the lipoyl domains of lipoate-dependent enzymes. Lipoyl-ACP can also act as a substrate although octanoyl-ACP is likely to be the physiological substrate. The sequence is that of Octanoyltransferase from Dechloromonas aromatica (strain RCB).